A 188-amino-acid polypeptide reads, in one-letter code: UPF0301 protein Cag_1601 (188 aa).

The protein belongs to the UPF0301 (AlgH) family.

This Chlorobium chlorochromatii (strain CaD3) protein is UPF0301 protein Cag_1601.